Here is a 247-residue protein sequence, read N- to C-terminus: 5'-nucleotidase SurE (247 aa).

Asp-8, Asp-9, Ser-39, and Asn-91 together coordinate a divalent metal cation.

This sequence belongs to the SurE nucleotidase family. The cofactor is a divalent metal cation.

The protein localises to the cytoplasm. It catalyses the reaction a ribonucleoside 5'-phosphate + H2O = a ribonucleoside + phosphate. Its function is as follows. Nucleotidase that shows phosphatase activity on nucleoside 5'-monophosphates. In Nitrosomonas eutropha (strain DSM 101675 / C91 / Nm57), this protein is 5'-nucleotidase SurE.